We begin with the raw amino-acid sequence, 913 residues long: DNA repair endonuclease XPF (913 aa).

Residues 1-454 form a helicase-like region; sequence MDRGISAVRK…EVWVNLRKGD (454 aa). 2 leucine-zipper regions span residues 233-254 and 270-298; these read LNACLKELKCHNPSLEVEDLSL and LDPLWHQLGAKTKSLVQDLKILRTLLQYL. Residue Lys289 is modified to N6-acetyllysine. Residues 453 to 476 show a composition bias toward basic and acidic residues; it reads GDGPKRTMKSDKRPKDTKNKERAS. Disordered stretches follow at residues 453-525 and 638-677; these read GDGP…CGGE and VVPEEREGRDETNLDLARGTVSTDAPADTRKAGGQEHNGT. Positions 483–488 match the Nuclear localization signal motif; sequence KRKKRE. The span at 500 to 509 shows a compositional bias: acidic residues; the sequence is EPPEEGAAEE. Ser518 is modified (phosphoserine). A compositionally biased stretch (basic and acidic residues) spans 638–649; sequence VVPEEREGRDET. The segment at 655 to 810 is nuclease; that stretch reads RGTVSTDAPA…PSPHATAELF (156 aa). An ERCC4 domain is found at 680 to 760; it reads SIVVDMREFR…RPVLLIEFDA (81 aa). The segment at 834–902 is hhH2, dimerization with ERCC1; it reads TLPESDKYNP…QLYDFLHTAY (69 aa).

This sequence belongs to the XPF family. As to quaternary structure, heterodimer composed of ERCC1 and ERCC4/XPF. Interacts with SLX4/BTBD12; this interaction is direct and links the ERCC1-ERCC4/XPF complex to SLX4, which may coordinate the action of the structure-specific endonuclease during DNA repair. Mg(2+) serves as cofactor.

It localises to the nucleus. It is found in the chromosome. Catalytic component of a structure-specific DNA repair endonuclease responsible for the 5-prime incision during DNA repair, and which is essential for nucleotide excision repair (NER) and interstrand cross-link (ICL) repair. The sequence is that of DNA repair endonuclease XPF from Cricetulus griseus (Chinese hamster).